We begin with the raw amino-acid sequence, 426 residues long: Glucose-1-phosphate adenylyltransferase (426 aa).

Alpha-D-glucose 1-phosphate contacts are provided by residues Gly165, 180–181 (EK), and Ser191.

The protein belongs to the bacterial/plant glucose-1-phosphate adenylyltransferase family. As to quaternary structure, homotetramer.

The enzyme catalyses alpha-D-glucose 1-phosphate + ATP + H(+) = ADP-alpha-D-glucose + diphosphate. The protein operates within glycan biosynthesis; glycogen biosynthesis. Involved in the biosynthesis of ADP-glucose, a building block required for the elongation reactions to produce glycogen. Catalyzes the reaction between ATP and alpha-D-glucose 1-phosphate (G1P) to produce pyrophosphate and ADP-Glc. The protein is Glucose-1-phosphate adenylyltransferase of Ruminiclostridium cellulolyticum (strain ATCC 35319 / DSM 5812 / JCM 6584 / H10) (Clostridium cellulolyticum).